A 259-amino-acid chain; its full sequence is Cytosolic Fe-S cluster assembly factor Nubp2 homolog (259 aa).

14–21 (GKGGVGKS) is a binding site for ATP. Residues Cys-188 and Cys-191 each coordinate [4Fe-4S] cluster.

It belongs to the Mrp/NBP35 ATP-binding proteins family. NUBP2/CFD1 subfamily. As to quaternary structure, heterotetramer of 2 Nubp1 and 2 Nubp2 chains. Requires [4Fe-4S] cluster as cofactor.

It is found in the cytoplasm. Functionally, component of the cytosolic iron-sulfur (Fe/S) protein assembly (CIA) machinery. Required for maturation of extramitochondrial Fe-S proteins. The Nubp1-Nubp2 heterotetramer forms a Fe-S scaffold complex, mediating the de novo assembly of an Fe-S cluster and its transfer to target apoproteins. In Aedes aegypti (Yellowfever mosquito), this protein is Cytosolic Fe-S cluster assembly factor Nubp2 homolog.